The sequence spans 377 residues: Nitric oxide reductase FlRd-NAD(+) reductase (377 aa).

Belongs to the FAD-dependent oxidoreductase family. The cofactor is FAD.

It is found in the cytoplasm. The catalysed reaction is 2 reduced [nitric oxide reductase rubredoxin domain] + NAD(+) + H(+) = 2 oxidized [nitric oxide reductase rubredoxin domain] + NADH. It functions in the pathway nitrogen metabolism; nitric oxide reduction. Functionally, one of at least two accessory proteins for anaerobic nitric oxide (NO) reductase. Reduces the rubredoxin moiety of NO reductase. The polypeptide is Nitric oxide reductase FlRd-NAD(+) reductase (Shigella sonnei (strain Ss046)).